Consider the following 208-residue polypeptide: Uracil phosphoribosyltransferase (208 aa).

Residues Arg78, Arg103, and 130-138 (DPMLATGGS) contribute to the 5-phospho-alpha-D-ribose 1-diphosphate site. Residues Ile193 and 198–200 (GDA) contribute to the uracil site. Asp199 is a 5-phospho-alpha-D-ribose 1-diphosphate binding site.

The protein belongs to the UPRTase family. The cofactor is Mg(2+).

The catalysed reaction is UMP + diphosphate = 5-phospho-alpha-D-ribose 1-diphosphate + uracil. It participates in pyrimidine metabolism; UMP biosynthesis via salvage pathway; UMP from uracil: step 1/1. With respect to regulation, allosterically activated by GTP. Catalyzes the conversion of uracil and 5-phospho-alpha-D-ribose 1-diphosphate (PRPP) to UMP and diphosphate. The sequence is that of Uracil phosphoribosyltransferase from Shewanella frigidimarina (strain NCIMB 400).